Consider the following 282-residue polypeptide: D-alanine aminotransferase (282 aa).

Substrate is bound at residue tyrosine 32. Position 51 (arginine 51) interacts with pyridoxal 5'-phosphate. Arginine 99 and histidine 101 together coordinate substrate. Residue lysine 146 is the Proton acceptor of the active site. Lysine 146 carries the N6-(pyridoxal phosphate)lysine modification. Residue glutamate 178 participates in pyridoxal 5'-phosphate binding.

This sequence belongs to the class-IV pyridoxal-phosphate-dependent aminotransferase family. In terms of assembly, homodimer. The cofactor is pyridoxal 5'-phosphate.

The catalysed reaction is D-alanine + 2-oxoglutarate = D-glutamate + pyruvate. Acts on the D-isomers of alanine, leucine, aspartate, glutamate, aminobutyrate, norvaline and asparagine. The enzyme transfers an amino group from a substrate D-amino acid to the pyridoxal phosphate cofactor to form pyridoxamine and an alpha-keto acid in the first half-reaction. The second half-reaction is the reverse of the first, transferring the amino group from the pyridoxamine to a second alpha-keto acid to form the product D-amino acid via a ping-pong mechanism. This is an important process in the formation of D-alanine and D-glutamate, which are essential bacterial cell wall components. The chain is D-alanine aminotransferase (dat) from Staphylococcus epidermidis (strain ATCC 35984 / DSM 28319 / BCRC 17069 / CCUG 31568 / BM 3577 / RP62A).